The primary structure comprises 1037 residues: Sentrin-specific protease 7 (1037 aa).

Basic residues predominate over residues 1–10 (MDRARPGRRR). 2 disordered regions span residues 1–27 (MDRA…SSPA) and 185–399 (SDTA…ENSS). Phosphoserine is present on residues serine 12, serine 13, and serine 25. Low complexity predominate over residues 192–208 (SEQLSSSSDGSLESCQS). Residues 272–282 (GTSNKNTSYSY) are compositionally biased toward polar residues. Basic residues predominate over residues 290–300 (VSRKRKKRGRS). Composition is skewed to basic and acidic residues over residues 301-321 (NFHD…HTKE) and 328-341 (VSRK…DSHQ). Residues 379–399 (ASSPNKSLESSASSEVSENSS) are compositionally biased toward low complexity. A phosphoserine mark is found at serine 434 and serine 435. Positions 747-1037 (LGVTNEDLEC…HLQQQKGGSC (291 aa)) are protease. Residue histidine 847 is part of the active site. The segment at 873–909 (QFQGQQSQHDHKMTDNDPHTTSTVSTSAEDSQSTEVN) is disordered. The segment covering 880 to 890 (QHDHKMTDNDP) has biased composition (basic and acidic residues). The segment covering 891 to 909 (HTTSTVSTSAEDSQSTEVN) has biased composition (polar residues). Aspartate 926 is a catalytic residue. The active-site Nucleophile is cysteine 979.

It belongs to the peptidase C48 family.

Its subcellular location is the cytoplasm. Its function is as follows. Protease that acts as a positive regulator of the cGAS-STING pathway by catalyzing desumoylation of CGAS. Desumoylation of CGAS promotes DNA-binding activity of CGAS, subsequent oligomerization and activation. Deconjugates SUMO2 and SUMO3 from targeted proteins, but not SUMO1. Catalyzes the deconjugation of poly-SUMO2 and poly-SUMO3 chains. Has very low efficiency in processing full-length SUMO proteins to their mature forms. The chain is Sentrin-specific protease 7 from Mus musculus (Mouse).